We begin with the raw amino-acid sequence, 967 residues long: MPRFSVAEARRYGDQFVQFLRDPSREQESRREVLRDIYSQEFRTRTDIRTPSFSSILYALRVSHQAQVHGQTVHFKKARRRVVVADQYRRPRTDTEVSAPAPGQQPSSGPPAPQSRAKKWAEFIRGKHGVEIVSEYDQANGQIRFPVALDKTKTFTVQVQNHGAEAVTLHRCRPLRRLQELSFLDEQGVTQGQALVLHPGGAYPIQVRCLTSHNGFFRAVVMFEFSKEPDGSFSIGRSIAAIAQSPLARELGPSAPYRPYQASLQRPITVVTEDGVPPVSSLKNELEKEIPLGTYPYPKSLKETIMLGPKTSPDSSWMKMQSLLEAPLQPENYKQKFELLLHLEEIQLEVDIRRYDLQEVPMVQNRALLLLNVPGVAENRPSVLRGDHLFASLSSERDSSPRVLYKGYVHGVELERVQLGFSPKLMKKFVNDLKFDVTFTFNRLPLQVQHRAAAMAMQKGLDSVLFPSASCQRSLFTGIFQPRWFDRKVEANEEQCQAVKHIVTGMSRPAPYLIFGPPGTGKTVTLVEAIKQVWSCFKDARILACAPSNSAADLLCQRLLTNIAPRYIYRIMASSANYKDVPADVRPCCNWDDSEKCYVYPSKKLLKPYRILITTLVTAGRLVSANFPPGYFSHVFIDECGHAVEPESVVAIAGLLTTMDPDTNPNGGQLVLAGDPQQLGPVPRSPLAAQHGLGTSLLERLMLHNALYAKSDEGYNPQFVTKLLWNYRSHKAILKVPNELFYDSELKAYEGSEPDVRNFYCTWEELPNRGVPIIFHGVCGEDEREAKSPSFFNTAEIEVVVQYLQKLLQSQGRRGCPTISPKEIGIISPYRKQVEKIRLAITSKDPVLRALPDIGQLKVGSVEEFQGQERRVILISTVRSCSEYLQLDQTFRLGFLKNPKRLNVALTRAKALLIVVGNAAVLSKDPHWHRFLRYCRDEGAYRGYPYEEEPPEEDSLANHLDSLHLGN.

The interval 85 to 117 (ADQYRRPRTDTEVSAPAPGQQPSSGPPAPQSRA) is disordered. Low complexity predominate over residues 98–107 (SAPAPGQQPS). An ATP-binding site is contributed by 516–523 (GPPGTGKT). A DEAG box motif is present at residues 638–641 (DECG).

Belongs to the DNA2/NAM7 helicase family. SDE3 subfamily.

The protein localises to the cytoplasm. It localises to the P-body. It is found in the cytoplasmic ribonucleoprotein granule. Its subcellular location is the stress granule. The protein resides in the nucleus. It carries out the reaction ATP + H2O = ADP + phosphate + H(+). Functionally, 5' to 3' RNA helicase that is involved in a number of cellular roles ranging from mRNA metabolism and translation, modulation of viral infectivity, inhibition of retrotransposition, or regulation of synaptic transmission. Plays an important role in innate antiviral immunity by promoting type I interferon production. Required for microRNA (miRNA)-mediated gene silencing by the RNA-induced silencing complex (RISC). Required for both miRNA-mediated translational repression and miRNA-mediated cleavage of complementary mRNAs by RISC. In cooperation with FMR1, regulates miRNA-mediated translational repression by AGO2. Restricts retrotransposition of long interspersed element-1 (LINE-1). Required for embryonic viability and for normal central nervous system development and function. May function as a messenger ribonucleoprotein (mRNP) clearance factor. The chain is Putative helicase MOV-10 (MOV10) from Gallus gallus (Chicken).